A 129-amino-acid chain; its full sequence is Prefoldin subunit alpha (129 aa).

Belongs to the prefoldin alpha subunit family. In terms of assembly, heterohexamer of two alpha and four beta subunits.

It localises to the cytoplasm. Functionally, molecular chaperone capable of stabilizing a range of proteins. Seems to fulfill an ATP-independent, HSP70-like function in archaeal de novo protein folding. This chain is Prefoldin subunit alpha, found in Thermofilum pendens (strain DSM 2475 / Hrk 5).